The following is a 309-amino-acid chain: Calcium homeostasis modulator protein 5 (309 aa).

The Cytoplasmic portion of the chain corresponds to 1–15; that stretch reads MDAFQSILKFFLNQK. Residues 16 to 37 traverse the membrane as a helical segment; sequence TAIGYSFMALLTVGSERLFSLV. 2 residues coordinate a 1,2-diacyl-sn-glycero-3-phosphate: arginine 32 and valine 37. The Extracellular segment spans residues 38–45; the sequence is AFKCPCSV. Intrachain disulfides connect cysteine 41/cysteine 127, cysteine 43/cysteine 158, and cysteine 142/cysteine 149. The helical transmembrane segment at 46–70 threads the bilayer; it reads ENTAYGLVFLFAPAWVLLILGFFLN. The Cytoplasmic segment spans residues 71-99; sequence NKAWRLFTGCCMNPKKIFPRRRCCRFFYV. A helical membrane pass occupies residues 100-129; it reads LGHIILSSLVAPVMWLSVALLNGTFYECAM. Asparagine 121 is an a 1,2-diacyl-sn-glycero-3-phosphate binding site. Residues 130–174 are Extracellular-facing; that stretch reads SGTRSTRLLEMICKGKPKECWEELHKVSCGKSSMAAMESEEVRLS. The helical transmembrane segment at 175 to 200 threads the bilayer; sequence LQAQSQILGWCLICSASFLSLLTTCY. Residues 201-309 lie on the Cytoplasmic side of the membrane; sequence ARCRSKVSYL…MILVGTAQSL (109 aa). A 1,2-diacyl-sn-glycero-3-phosphate is bound at residue arginine 202.

It belongs to the CALHM family. In terms of assembly, oligomerizes to form undecameric cone-shaped channels.

It localises to the membrane. Its function is as follows. May assemble to form large pore channels with gating and ion conductance likely regulated by membrane lipids. The protein is Calcium homeostasis modulator protein 5 of Mus musculus (Mouse).